The chain runs to 382 residues: Probable trehalose-phosphate phosphatase 2 (382 aa).

This sequence belongs to the trehalose phosphatase family. A divalent metal cation is required as a cofactor. As to expression, expressed in roots and shoots.

The catalysed reaction is alpha,alpha-trehalose 6-phosphate + H2O = alpha,alpha-trehalose + phosphate. Its pathway is glycan biosynthesis; trehalose biosynthesis. Functionally, removes the phosphate from trehalose 6-phosphate to produce free trehalose. Trehalose accumulation in plant may improve abiotic stress tolerance. In Oryza sativa subsp. japonica (Rice), this protein is Probable trehalose-phosphate phosphatase 2 (TPP2).